The following is a 212-amino-acid chain: Ribonuclease HII (212 aa).

The RNase H type-2 domain occupies 2 to 206 (TPLVGVDEAG…CERIRAEAEQ (205 aa)). Residues D8, E9, and D101 each coordinate a divalent metal cation.

The protein belongs to the RNase HII family. The cofactor is Mn(2+). Requires Mg(2+) as cofactor.

The protein localises to the cytoplasm. The enzyme catalyses Endonucleolytic cleavage to 5'-phosphomonoester.. Functionally, endonuclease that specifically degrades the RNA of RNA-DNA hybrids. In Natronomonas pharaonis (strain ATCC 35678 / DSM 2160 / CIP 103997 / JCM 8858 / NBRC 14720 / NCIMB 2260 / Gabara) (Halobacterium pharaonis), this protein is Ribonuclease HII.